We begin with the raw amino-acid sequence, 128 residues long: Hemoglobin subunit beta-1 (128 aa).

The Globin domain occupies 2–128 (HWTAEEKALV…VVDALSKGYH (127 aa)). Residues His51 and His74 each contribute to the heme b site.

It belongs to the globin family. As to quaternary structure, hb 1 is a heterotetramer of two alpha and two beta-1 chains. Red blood cells (at protein level).

Functionally, involved in oxygen transport from gills to the various peripheral tissues. This is Hemoglobin subunit beta-1 from Somniosus microcephalus (Greenland sleeper shark).